The following is a 416-amino-acid chain: MEPISNVEDPNSSEGDEKRWPDGPKRKRKNSTCSVKSMSALSLSVQGYIPSYLEKDEPCVVCGDKATGYHYRCITCEGCKGFFRRTIQKNLHPAYSCKYDGCCIIDKITRNQCQLCRFRKCIAVCMAMDLVLDDSKRVAKRRLIEENREKRKKDEIVKTLQARPEPDSSEWELIRHVTEAHRHTNAQGSHWKQKRKFLPEDIGQSPRAPTPDGDKVDLEAFSEFTKIITPAITRVVDFAKKLPMFSELPCEDQIILLKGCCMEIMSLRAAVRYDPESETLTLSGEMAVKREQLKNGGLGVVSDAIFDLGKSLAQFNLDDSEVALLQAVLLMSSDRSGLTLVDKIEKCQETYLLAFEHYINHRKHNIPHFWPKLLMKVTDLRMIGACHASRFLHMKVECPNELFPPLFLEVFEDQEV.

Positions 1–30 are disordered; sequence MEPISNVEDPNSSEGDEKRWPDGPKRKRKN. The segment at 1–58 is modulating; the sequence is MEPISNVEDPNSSEGDEKRWPDGPKRKRKNSTCSVKSMSALSLSVQGYIPSYLEKDEP. The segment covering 15–24 has biased composition (basic and acidic residues); the sequence is GDEKRWPDGP. 8 residues coordinate Zn(2+): C59, C62, C76, C79, C97, C103, C113, and C116. 2 NR C4-type zinc fingers span residues 59–79 and 97–121; these read CVVC…CEGC and CKYD…FRKC. The segment at residues 59–133 is a DNA-binding region (nuclear receptor); that stretch reads CVVCGDKATG…VCMAMDLVLD (75 aa). Positions 169–413 constitute an NR LBD domain; the sequence is SEWELIRHVT…PPLFLEVFED (245 aa). The 3,3',5-triiodo-L-thyronine site is built by R234 and S283.

Belongs to the nuclear hormone receptor family. NR1 subfamily.

It is found in the nucleus. Its function is as follows. Nuclear hormone receptor that can act as a repressor or activator of transcription. High affinity receptor for thyroid hormones, including triiodothyronine and thyroxine. In Salmo salar (Atlantic salmon), this protein is Thyroid hormone receptor alpha (thra1).